The sequence spans 683 residues: Methionine--tRNA ligase (683 aa).

A 'HIGH' region motif is present at residues 15 to 25; the sequence is PYANGPIHLGH. Positions 146, 149, 159, and 162 each coordinate Zn(2+). A 'KMSKS' region motif is present at residues 332–336; sequence KMSKS. Lys-335 lines the ATP pocket. The region spanning 582–683 is the tRNA-binding domain; that stretch reads DFAKIDLRIA…EGALPGMRVK (102 aa).

Belongs to the class-I aminoacyl-tRNA synthetase family. MetG type 1 subfamily. As to quaternary structure, homodimer. The cofactor is Zn(2+).

Its subcellular location is the cytoplasm. It carries out the reaction tRNA(Met) + L-methionine + ATP = L-methionyl-tRNA(Met) + AMP + diphosphate. In terms of biological role, is required not only for elongation of protein synthesis but also for the initiation of all mRNA translation through initiator tRNA(fMet) aminoacylation. This chain is Methionine--tRNA ligase, found in Shewanella frigidimarina (strain NCIMB 400).